We begin with the raw amino-acid sequence, 192 residues long: Xanthine phosphoribosyltransferase (192 aa).

Residues leucine 20 and asparagine 27 each coordinate xanthine. 128 to 132 (ANGDA) contributes to the 5-phospho-alpha-D-ribose 1-diphosphate binding site. Residue lysine 156 participates in xanthine binding.

The protein belongs to the purine/pyrimidine phosphoribosyltransferase family. Xpt subfamily. As to quaternary structure, homodimer.

The protein resides in the cytoplasm. It carries out the reaction XMP + diphosphate = xanthine + 5-phospho-alpha-D-ribose 1-diphosphate. The protein operates within purine metabolism; XMP biosynthesis via salvage pathway; XMP from xanthine: step 1/1. Functionally, converts the preformed base xanthine, a product of nucleic acid breakdown, to xanthosine 5'-monophosphate (XMP), so it can be reused for RNA or DNA synthesis. This Staphylococcus aureus (strain Mu3 / ATCC 700698) protein is Xanthine phosphoribosyltransferase.